Here is a 262-residue protein sequence, read N- to C-terminus: Acyl-[acyl-carrier-protein]--UDP-N-acetylglucosamine O-acyltransferase (262 aa).

Belongs to the transferase hexapeptide repeat family. LpxA subfamily. In terms of assembly, homotrimer.

Its subcellular location is the cytoplasm. The catalysed reaction is a (3R)-hydroxyacyl-[ACP] + UDP-N-acetyl-alpha-D-glucosamine = a UDP-3-O-[(3R)-3-hydroxyacyl]-N-acetyl-alpha-D-glucosamine + holo-[ACP]. Its pathway is glycolipid biosynthesis; lipid IV(A) biosynthesis; lipid IV(A) from (3R)-3-hydroxytetradecanoyl-[acyl-carrier-protein] and UDP-N-acetyl-alpha-D-glucosamine: step 1/6. Involved in the biosynthesis of lipid A, a phosphorylated glycolipid that anchors the lipopolysaccharide to the outer membrane of the cell. The chain is Acyl-[acyl-carrier-protein]--UDP-N-acetylglucosamine O-acyltransferase from Vibrio cholerae serotype O1 (strain ATCC 39541 / Classical Ogawa 395 / O395).